Here is a 389-residue protein sequence, read N- to C-terminus: Phospho-N-acetylmuramoyl-pentapeptide-transferase (389 aa).

11 consecutive transmembrane segments (helical) span residues 25–45 (RAVM…PWVI), 74–94 (MGGV…CDWG), 97–117 (FIWV…VDDY), 134–154 (FFWQ…SVSE), 167–187 (WIEG…VPFF), 190–210 (VSYP…IVGS), 222–242 (GLVI…AYVM), 259–279 (AGEL…FLWF), 286–306 (VFMG…VAVI), 311–331 (IVLF…MLQV), and 366–386 (QVTV…LSSL).

Belongs to the glycosyltransferase 4 family. MraY subfamily. It depends on Mg(2+) as a cofactor.

The protein resides in the cell inner membrane. The enzyme catalyses UDP-N-acetyl-alpha-D-muramoyl-L-alanyl-gamma-D-glutamyl-meso-2,6-diaminopimeloyl-D-alanyl-D-alanine + di-trans,octa-cis-undecaprenyl phosphate = di-trans,octa-cis-undecaprenyl diphospho-N-acetyl-alpha-D-muramoyl-L-alanyl-D-glutamyl-meso-2,6-diaminopimeloyl-D-alanyl-D-alanine + UMP. It functions in the pathway cell wall biogenesis; peptidoglycan biosynthesis. Its function is as follows. Catalyzes the initial step of the lipid cycle reactions in the biosynthesis of the cell wall peptidoglycan: transfers peptidoglycan precursor phospho-MurNAc-pentapeptide from UDP-MurNAc-pentapeptide onto the lipid carrier undecaprenyl phosphate, yielding undecaprenyl-pyrophosphoryl-MurNAc-pentapeptide, known as lipid I. In Cupriavidus metallidurans (strain ATCC 43123 / DSM 2839 / NBRC 102507 / CH34) (Ralstonia metallidurans), this protein is Phospho-N-acetylmuramoyl-pentapeptide-transferase.